The chain runs to 251 residues: Diphthine synthase (251 aa).

S-adenosyl-L-methionine-binding positions include Leu-9, Asp-84, Val-87, 112–113 (SI), Leu-160, Ala-194, and His-219.

Belongs to the diphthine synthase family. In terms of assembly, homodimer.

The catalysed reaction is 2-[(3S)-amino-3-carboxypropyl]-L-histidyl-[translation elongation factor 2] + 3 S-adenosyl-L-methionine = diphthine-[translation elongation factor 2] + 3 S-adenosyl-L-homocysteine + 3 H(+). The protein operates within protein modification; peptidyl-diphthamide biosynthesis. Functionally, S-adenosyl-L-methionine-dependent methyltransferase that catalyzes the trimethylation of the amino group of the modified target histidine residue in translation elongation factor 2 (EF-2), to form an intermediate called diphthine. The three successive methylation reactions represent the second step of diphthamide biosynthesis. The protein is Diphthine synthase of Archaeoglobus fulgidus (strain ATCC 49558 / DSM 4304 / JCM 9628 / NBRC 100126 / VC-16).